Reading from the N-terminus, the 162-residue chain is Lymphocyte antigen 86 (162 aa).

Positions methionine 1–glycine 20 are cleaved as a signal peptide. Disulfide bonds link cysteine 33/cysteine 58, cysteine 45/cysteine 154, and cysteine 102/cysteine 112. Residue asparagine 96 is glycosylated (N-linked (GlcNAc...) asparagine). N-linked (GlcNAc...) asparagine glycosylation is present at asparagine 156.

M-shaped tetramer of two CD180-LY86 heterodimers. In terms of tissue distribution, highly expressed in B-cells, monocytes and tonsil.

It localises to the secreted. It is found in the extracellular space. In terms of biological role, may cooperate with CD180 and TLR4 to mediate the innate immune response to bacterial lipopolysaccharide (LPS) and cytokine production. Important for efficient CD180 cell surface expression. This Homo sapiens (Human) protein is Lymphocyte antigen 86 (LY86).